Reading from the N-terminus, the 418-residue chain is D-amino acid dehydrogenase (418 aa).

3–17 (VLVLGAGVAGVSSAW) is a binding site for FAD.

It belongs to the DadA oxidoreductase family. The cofactor is FAD.

It catalyses the reaction a D-alpha-amino acid + A + H2O = a 2-oxocarboxylate + AH2 + NH4(+). It participates in amino-acid degradation; D-alanine degradation; NH(3) and pyruvate from D-alanine: step 1/1. In terms of biological role, oxidative deamination of D-amino acids. The chain is D-amino acid dehydrogenase from Neisseria meningitidis serogroup C / serotype 2a (strain ATCC 700532 / DSM 15464 / FAM18).